The primary structure comprises 238 residues: Thiamine import ATP-binding protein ThiQ (238 aa).

The ABC transporter domain maps to 1–234; sequence MSSTALAVKG…RDIAAINRFL (234 aa). 36–43 is a binding site for ATP; that stretch reads GASGSGKS.

The protein belongs to the ABC transporter superfamily. Thiamine importer (TC 3.A.1.19.1) family. The complex is composed of two ATP-binding proteins (ThiQ), two transmembrane proteins (ThiP) and a solute-binding protein (ThiB).

The protein resides in the cell inner membrane. It catalyses the reaction thiamine(out) + ATP + H2O = thiamine(in) + ADP + phosphate + H(+). Part of the ABC transporter complex ThiBPQ involved in thiamine import. Responsible for energy coupling to the transport system. This is Thiamine import ATP-binding protein ThiQ from Rhizobium meliloti (strain 1021) (Ensifer meliloti).